The following is a 258-amino-acid chain: UPF0246 protein YaaA (258 aa).

It belongs to the UPF0246 family.

The polypeptide is UPF0246 protein YaaA (Escherichia coli O8 (strain IAI1)).